Reading from the N-terminus, the 416-residue chain is MEPMSNKQDSNSSEGDEKGWPDVPKRKRKNSQCSMKSMSALSVSVPGYIPSYLEKDEPCVVCGDKATGYHYRCITCEGCKGFFRRTIQKNLHPSYSCKYEGCCIIDKITRNQCQLCRFKKCISVGMAMDLVLDDSKRVAKRRLIEENREKRKREEMVRTLQIRPEPDTAEWELIRMATDAHRHTNAQGSSWKQKRKFLSDDIGQSPMVPTSDGDKVDLEAFSEFTKIMTPAITRVVDFAKKLPMFSELPCEDQIILLKGCCMEIMSLRAAVRYDPDSETLTLNSEMAVKREQLKNGGLGVVSDAIFDLGKELGQFNLDDTEVALMQAVLLMSSDRSGHQCMEKIEQCQEAYLLAFEHYINYRKHNIPHFWPKLLMKVTDLRMIGACHASRFLHMKVECPSELFPPLFLEVFEDQEV.

Positions 1 to 13 (MEPMSNKQDSNSS) are enriched in polar residues. Residues 1-37 (MEPMSNKQDSNSSEGDEKGWPDVPKRKRKNSQCSMKS) form a disordered region. A modulating region spans residues 1-58 (MEPMSNKQDSNSSEGDEKGWPDVPKRKRKNSQCSMKSMSALSVSVPGYIPSYLEKDEP). Positions 15 to 24 (GDEKGWPDVP) are enriched in basic and acidic residues. NR C4-type zinc fingers lie at residues 59–79 (CVVC…CEGC) and 97–121 (CKYE…FKKC). The nuclear receptor DNA-binding region spans 59-126 (CVVCGDKATG…RFKKCISVGM (68 aa)). The NR LBD domain occupies 169 to 413 (AEWELIRMAT…PPLFLEVFED (245 aa)).

Belongs to the nuclear hormone receptor family. NR1 subfamily.

The protein resides in the nucleus. High affinity receptor for triiodothyronine. This chain is Thyroid hormone receptor alpha-A (thra1), found in Paralichthys olivaceus (Bastard halibut).